The following is a 124-amino-acid chain: Modulator protein MzrA (124 aa).

The Cytoplasmic portion of the chain corresponds to 1–7 (MINRRMK). Residues 8–28 (TGFVFHLLLLLLPLVVLVTSS) traverse the membrane as a helical segment. The Periplasmic segment spans residues 29–124 (RRTADDVTLH…KLSQQPFKLG (96 aa)).

It belongs to the MzrA family. In terms of assembly, interacts with EnvZ.

It localises to the cell inner membrane. Functionally, modulates the activity of the EnvZ/OmpR two-component regulatory system, probably by directly modulating EnvZ enzymatic activity and increasing stability of phosphorylated OmpR. This is Modulator protein MzrA from Musicola paradisiaca (strain Ech703) (Dickeya paradisiaca).